A 201-amino-acid polypeptide reads, in one-letter code: MSQRSAGPELLRLIDLIAKLPGLGPRSARRVALHLLKRNDTLLKPLAEALAEAGAKIQKCATCGNFDTVQPCAVCQMPGRDDGIICVVEDVPDLWALERGGSFRGRYHVLGGALSAIDGIGPEDLGIASLVARVDAGGVREVILALNATVDGQTTAHYVADLLAGKGVDVTRLAHGVPVGGELDHLDDGTLAAALRSRRGV.

A C4-type zinc finger spans residues 60–75 (CATCGNFDTVQPCAVC). The Toprim domain maps to 83–178 (GIICVVEDVP…DVTRLAHGVP (96 aa)).

Belongs to the RecR family.

May play a role in DNA repair. It seems to be involved in an RecBC-independent recombinational process of DNA repair. It may act with RecF and RecO. The protein is Recombination protein RecR of Hyphomonas neptunium (strain ATCC 15444).